We begin with the raw amino-acid sequence, 428 residues long: GTPase Obg (428 aa).

The 158-residue stretch at 1–158 (MFIDIAKVFI…LSIVLELKLL (158 aa)) folds into the Obg domain. Residues 159 to 331 (ADVGLLGFPN…VIKEAARMLK (173 aa)) enclose the OBG-type G domain. Residues 165–172 (GFPNVGKS), 190–194 (FTTLK), 212–215 (DIPG), 282–285 (NKSD), and 312–314 (SAA) contribute to the GTP site. Residues Ser-172 and Thr-192 each coordinate Mg(2+). An OCT domain is found at 345–428 (MYIPEEKKFT…LNDFEFEYLL (84 aa)).

This sequence belongs to the TRAFAC class OBG-HflX-like GTPase superfamily. OBG GTPase family. As to quaternary structure, monomer. Requires Mg(2+) as cofactor.

It is found in the cytoplasm. An essential GTPase which binds GTP, GDP and possibly (p)ppGpp with moderate affinity, with high nucleotide exchange rates and a fairly low GTP hydrolysis rate. Plays a role in control of the cell cycle, stress response, ribosome biogenesis and in those bacteria that undergo differentiation, in morphogenesis control. This chain is GTPase Obg, found in Clostridium botulinum (strain Alaska E43 / Type E3).